The sequence spans 452 residues: Exodeoxyribonuclease 7 large subunit (452 aa).

The protein belongs to the XseA family. In terms of assembly, heterooligomer composed of large and small subunits.

It is found in the cytoplasm. It catalyses the reaction Exonucleolytic cleavage in either 5'- to 3'- or 3'- to 5'-direction to yield nucleoside 5'-phosphates.. In terms of biological role, bidirectionally degrades single-stranded DNA into large acid-insoluble oligonucleotides, which are then degraded further into small acid-soluble oligonucleotides. The sequence is that of Exodeoxyribonuclease 7 large subunit from Bacillus thuringiensis (strain Al Hakam).